We begin with the raw amino-acid sequence, 249 residues long: Ribosomal RNA small subunit methyltransferase J (249 aa).

S-adenosyl-L-methionine is bound by residues 101–102, 117–118, and D171; these read RD and ER.

It belongs to the methyltransferase superfamily. RsmJ family.

It localises to the cytoplasm. The catalysed reaction is guanosine(1516) in 16S rRNA + S-adenosyl-L-methionine = N(2)-methylguanosine(1516) in 16S rRNA + S-adenosyl-L-homocysteine + H(+). Its function is as follows. Specifically methylates the guanosine in position 1516 of 16S rRNA. This Tolumonas auensis (strain DSM 9187 / NBRC 110442 / TA 4) protein is Ribosomal RNA small subunit methyltransferase J.